We begin with the raw amino-acid sequence, 316 residues long: MSWKTEEVESHIPVMLKEFLKHCSPKRDEQWIDGTFGYGGHTTALLDKGCKVLALDTDEDAQKRAEILKEKGEEFYFFRKNFSEMAEACFQMGWTAVDGILLDLGVSLGQLKDPKRGFSFQFPDAPLDMRMDRTRERTGAALLNTLSKEQLVQLFSVACNMKESQKLANEIVRFRSTGPIKKVGDFLEIVTRARLLKSKINAATRPFLALRIAVNEELEHLEKALREGTKLLKGGGRIAVISFHSAEDRIVKEFMRSHCLPKKGEGVAEEENHREMFFYKVERVLVSLEERKNNPRSRSARLRIAWKIPLEEKSGL.

S-adenosyl-L-methionine-binding positions include 39-41 (GGH), D56, F82, D103, and Q110.

This sequence belongs to the methyltransferase superfamily. RsmH family.

It localises to the cytoplasm. The catalysed reaction is cytidine(1402) in 16S rRNA + S-adenosyl-L-methionine = N(4)-methylcytidine(1402) in 16S rRNA + S-adenosyl-L-homocysteine + H(+). Its function is as follows. Specifically methylates the N4 position of cytidine in position 1402 (C1402) of 16S rRNA. The protein is Ribosomal RNA small subunit methyltransferase H of Methylacidiphilum infernorum (isolate V4) (Methylokorus infernorum (strain V4)).